We begin with the raw amino-acid sequence, 319 residues long: Acetyl-coenzyme A carboxylase carboxyl transferase subunit alpha (319 aa).

The CoA carboxyltransferase C-terminal domain occupies 35-296; sequence DLDKEIEQLE…KDMLVKQLEE (262 aa).

It belongs to the AccA family. In terms of assembly, acetyl-CoA carboxylase is a heterohexamer composed of biotin carboxyl carrier protein (AccB), biotin carboxylase (AccC) and two subunits each of ACCase subunit alpha (AccA) and ACCase subunit beta (AccD).

Its subcellular location is the cytoplasm. The catalysed reaction is N(6)-carboxybiotinyl-L-lysyl-[protein] + acetyl-CoA = N(6)-biotinyl-L-lysyl-[protein] + malonyl-CoA. The protein operates within lipid metabolism; malonyl-CoA biosynthesis; malonyl-CoA from acetyl-CoA: step 1/1. In terms of biological role, component of the acetyl coenzyme A carboxylase (ACC) complex. First, biotin carboxylase catalyzes the carboxylation of biotin on its carrier protein (BCCP) and then the CO(2) group is transferred by the carboxyltransferase to acetyl-CoA to form malonyl-CoA. The protein is Acetyl-coenzyme A carboxylase carboxyl transferase subunit alpha of Vibrio atlanticus (strain LGP32) (Vibrio splendidus (strain Mel32)).